A 310-amino-acid polypeptide reads, in one-letter code: MGRIDITILGSGSAVPSLHRWHPSILVKDWMGNTVLLDAGEGVQIRLRKVGVSPSSIDVLAITHPHGDHINGVAGLLMTMSLQSRRKPLTIISTSESLEFISETLEATRENLGFEVMLVDARESGVLDVGRPSGDRLTIEWERACHNIESLAFKLVWTLRPRIDARILERLDLKAGPWIRELIEKGRAHVEGRIVTLKDISASGERKYSVAYTGDTSPCTRVAKFLHGSDILIHDSTLDSSLAREAAERGHSTSLDAARNALTSGAKLLILFHVSSRYSGYEARLLLKEARRVFPNTVLSWDGMKLSITI.

Zn(2+) is bound by residues histidine 64, histidine 66, aspartate 68, histidine 69, histidine 146, aspartate 215, and histidine 273. Aspartate 68 acts as the Proton acceptor in catalysis.

The protein belongs to the RNase Z family. Homodimer. Zn(2+) is required as a cofactor.

The enzyme catalyses Endonucleolytic cleavage of RNA, removing extra 3' nucleotides from tRNA precursor, generating 3' termini of tRNAs. A 3'-hydroxy group is left at the tRNA terminus and a 5'-phosphoryl group is left at the trailer molecule.. Its function is as follows. Zinc phosphodiesterase, which displays some tRNA 3'-processing endonuclease activity. Probably involved in tRNA maturation, by removing a 3'-trailer from precursor tRNA. This chain is Ribonuclease Z, found in Aeropyrum pernix (strain ATCC 700893 / DSM 11879 / JCM 9820 / NBRC 100138 / K1).